A 387-amino-acid chain; its full sequence is Early growth response protein 3 (387 aa).

Positions 241–283 (PGFGSLPQPPLTLKPIRPRKYPNRPSKTPLHERPHACPAEGCD) are disordered. A compositionally biased stretch (basic and acidic residues) spans 269-283 (PLHERPHACPAEGCD). 3 C2H2-type zinc fingers span residues 275–299 (HACP…LRIH), 305–327 (FQCR…IRTH), and 333–355 (FACE…AKIH). Residues 348–387 (RKRHAKIHLKQKEKKSEKGGAPSASSAPTVSLAPVVTTCA) form a disordered region. Over residues 350–360 (RHAKIHLKQKE) the composition is skewed to basic residues.

This sequence belongs to the EGR C2H2-type zinc-finger protein family.

It is found in the nucleus. Its function is as follows. Probable transcription factor involved in muscle spindle development. In Mus musculus (Mouse), this protein is Early growth response protein 3 (Egr3).